The following is a 241-amino-acid chain: Uridylate kinase (241 aa).

15-18 (KLSG) lines the ATP pocket. Residues 23-28 (GTEGFG) form an involved in allosteric activation by GTP region. Gly-57 contacts UMP. ATP is bound by residues Gly-58 and Arg-62. Residues Asp-77 and 138–145 (TGNPFFTT) contribute to the UMP site. ATP is bound by residues Thr-165, Phe-171, and Asp-174.

The protein belongs to the UMP kinase family. As to quaternary structure, homohexamer.

It localises to the cytoplasm. The catalysed reaction is UMP + ATP = UDP + ADP. It functions in the pathway pyrimidine metabolism; CTP biosynthesis via de novo pathway; UDP from UMP (UMPK route): step 1/1. With respect to regulation, allosterically activated by GTP. Inhibited by UTP. Functionally, catalyzes the reversible phosphorylation of UMP to UDP. The sequence is that of Uridylate kinase from Shigella dysenteriae serotype 1 (strain Sd197).